Consider the following 625-residue polypeptide: Chaperone protein HtpG (625 aa).

The a; substrate-binding stretch occupies residues 1 to 337 (MSTNQETRGF…TNDLPLNVSR (337 aa)). Residues 338 to 554 (EILQENKITA…NDEMTTQMAK (217 aa)) are b. Residues 555 to 625 (LFAAMGQKAP…FIKRMNKLLG (71 aa)) form a c region.

It belongs to the heat shock protein 90 family. Homodimer.

The protein localises to the cytoplasm. In terms of biological role, molecular chaperone. Has ATPase activity. This chain is Chaperone protein HtpG, found in Actinobacillus pleuropneumoniae serotype 5b (strain L20).